A 272-amino-acid chain; its full sequence is HMP-PP phosphatase (272 aa).

Asp-8 serves as the catalytic Nucleophile. Residues Asp-8, Asp-10, and Asp-212 each coordinate Mg(2+).

The protein belongs to the HAD-like hydrolase superfamily. Cof family. Mg(2+) is required as a cofactor.

It catalyses the reaction 4-amino-2-methyl-5-(diphosphooxymethyl)pyrimidine + H2O = 4-amino-2-methyl-5-(phosphooxymethyl)pyrimidine + phosphate + H(+). Catalyzes the hydrolysis of 4-amino-2-methyl-5-hydroxymethylpyrimidine pyrophosphate (HMP-PP) to 4-amino-2-methyl-5-hydroxymethylpyrimidine phosphate (HMP-P). The chain is HMP-PP phosphatase from Enterobacter sp. (strain 638).